The sequence spans 78 residues: Vacuolar ATPase assembly integral membrane protein VMA21 (78 aa).

Topologically, residues 1–14 (MPADIPKSVVQKLV) are cytoplasmic. Residues 15–35 (FFTAAMIICPVATFFICQYLF) traverse the membrane as a helical segment. Residues 36 to 38 (SNN) lie on the Lumenal side of the membrane. A helical membrane pass occupies residues 39–59 (AIISGGVSALVANIVLIGYVV). Residues 60–78 (AAFMEDTTEQEPEETKKSR) are Cytoplasmic-facing. The short motif at 75 to 78 (KKSR) is the Prevents secretion from ER element.

Belongs to the VMA21 family.

It localises to the endoplasmic reticulum membrane. The protein localises to the endoplasmic reticulum-Golgi intermediate compartment membrane. The protein resides in the cytoplasmic vesicle. It is found in the COPII-coated vesicle membrane. Functionally, required for the assembly of the V0 complex of the vacuolar ATPase (V-ATPase) in the endoplasmic reticulum. The sequence is that of Vacuolar ATPase assembly integral membrane protein VMA21 from Debaryomyces hansenii (strain ATCC 36239 / CBS 767 / BCRC 21394 / JCM 1990 / NBRC 0083 / IGC 2968) (Yeast).